Consider the following 148-residue polypeptide: Lipoprotein signal peptidase (148 aa).

A run of 2 helical transmembrane segments spans residues 57–77 (QWIF…YLNT) and 80–100 (VHIF…GNLI). Catalysis depends on residues aspartate 110 and aspartate 126. A helical transmembrane segment spans residues 124-144 (IADVFVVVGTVFLCIYVLFFE).

The protein belongs to the peptidase A8 family.

The protein localises to the cell membrane. It catalyses the reaction Release of signal peptides from bacterial membrane prolipoproteins. Hydrolyzes -Xaa-Yaa-Zaa-|-(S,diacylglyceryl)Cys-, in which Xaa is hydrophobic (preferably Leu), and Yaa (Ala or Ser) and Zaa (Gly or Ala) have small, neutral side chains.. The protein operates within protein modification; lipoprotein biosynthesis (signal peptide cleavage). Its function is as follows. This protein specifically catalyzes the removal of signal peptides from prolipoproteins. This chain is Lipoprotein signal peptidase, found in Clostridioides difficile (strain 630) (Peptoclostridium difficile).